The sequence spans 310 residues: Nuclear hormone receptor family member nhr-89 (310 aa).

The nuclear receptor DNA-binding region spans 5–79 (EGPCRVCHSV…SGMRRDCVRK (75 aa)). 2 NR C4-type zinc fingers span residues 8 to 29 (CRVC…CMSC) and 43 to 67 (CPAN…YNKC). An NR LBD domain is found at 101–310 (KLSESYEELL…TLHQKYQIPF (210 aa)).

Belongs to the nuclear hormone receptor family.

It localises to the nucleus. Functionally, orphan nuclear receptor. The sequence is that of Nuclear hormone receptor family member nhr-89 (nhr-89) from Caenorhabditis elegans.